The following is a 91-amino-acid chain: Small ribosomal subunit protein uS19 (91 aa).

Belongs to the universal ribosomal protein uS19 family.

Protein S19 forms a complex with S13 that binds strongly to the 16S ribosomal RNA. In Pseudoalteromonas atlantica (strain T6c / ATCC BAA-1087), this protein is Small ribosomal subunit protein uS19.